The following is a 135-amino-acid chain: Histone H3 type 2 (135 aa).

The tract at residues 1 to 40 is disordered; that stretch reads MARTKQTARKSTGGKAPRKQLATKAARKTPATGGVKKPHR. The residue at position 5 (Lys5) is an N6-methyllysine. Lys10 is subject to N6-acetyllysine; alternate. An N6-methyllysine; alternate modification is found at Lys10. Position 11 is a phosphoserine (Ser11). Thr12 is modified (phosphothreonine). 3 positions are modified to N6-acetyllysine: Lys15, Lys19, and Lys24. Lys28 carries the post-translational modification N6-acetyllysine; alternate. Lys28 bears the N6-methyllysine; alternate mark. N6-methyllysine is present on residues Lys36 and Lys37.

The protein belongs to the histone H3 family. The nucleosome is a histone octamer containing two molecules each of H2A, H2B, H3 and H4 assembled in one H3-H4 heterotetramer and two H2A-H2B heterodimers. The octamer wraps approximately 147 bp of DNA. Post-translationally, acetylation is generally linked to gene activation. Acetylated to form H3K9ac (11%), H3K14ac (17%), H3K18ac (11%), H3K23ac (16%) and H3K27ac (7%). H3K4, H3K35 and H3K36 are not acetylated. H3K4me prevents acetylation. 32% of the histone H3 are acetylated with, on average, 2.4 acetyl-Lys. They are all continuously deacatylated and re-acetylated with a half-life of approximately 2 minutes. In terms of processing, monomethylated to form H3K4me1 (81%), H3K9me1 (16%), H3K27me1 (25%), H3K35me1 (25%) and H3K36me1 (5%). No methylation at H3K14, H3K18 and H3K23. Methylated by a protein complex that includes Mut11. Set1 methylates specifically H3K4. H3K4me1 is associated with silenced euchromatin. Set3 forms H3K9me1, while H3K9me2 is undetected. H3K9me1 is specifically associated with silent, multi-copy transgenes. No phosphorylation detected.

The protein resides in the nucleus. The protein localises to the chromosome. Core component of nucleosome. Nucleosomes wrap and compact DNA into chromatin, limiting DNA accessibility to the cellular machineries which require DNA as a template. Histones thereby play a central role in transcription regulation, DNA repair, DNA replication and chromosomal stability. DNA accessibility is regulated via a complex set of post-translational modifications of histones, also called histone code, and nucleosome remodeling. The chain is Histone H3 type 2 (ch3-II) from Chlamydomonas reinhardtii (Chlamydomonas smithii).